The following is a 93-amino-acid chain: uncharacterized protein (93 aa).

It belongs to the SIMIBI class G3E GTPase family. ArgK/MeaB subfamily.

This is an uncharacterized protein from Streptomyces virginiae (Streptomyces cinnamonensis).